Consider the following 228-residue polypeptide: NADH-quinone oxidoreductase subunit C (228 aa).

This sequence belongs to the complex I 30 kDa subunit family. NDH-1 is composed of 14 different subunits. Subunits NuoB, C, D, E, F, and G constitute the peripheral sector of the complex.

The protein localises to the cell membrane. The enzyme catalyses a quinone + NADH + 5 H(+)(in) = a quinol + NAD(+) + 4 H(+)(out). In terms of biological role, NDH-1 shuttles electrons from NADH, via FMN and iron-sulfur (Fe-S) centers, to quinones in the respiratory chain. The immediate electron acceptor for the enzyme in this species is believed to be a menaquinone. Couples the redox reaction to proton translocation (for every two electrons transferred, four hydrogen ions are translocated across the cytoplasmic membrane), and thus conserves the redox energy in a proton gradient. The polypeptide is NADH-quinone oxidoreductase subunit C (Mycobacteroides abscessus (strain ATCC 19977 / DSM 44196 / CCUG 20993 / CIP 104536 / JCM 13569 / NCTC 13031 / TMC 1543 / L948) (Mycobacterium abscessus)).